Here is a 314-residue protein sequence, read N- to C-terminus: ATP synthase gamma chain (314 aa).

Belongs to the ATPase gamma chain family. As to quaternary structure, F-type ATPases have 2 components, CF(1) - the catalytic core - and CF(0) - the membrane proton channel. CF(1) has five subunits: alpha(3), beta(3), gamma(1), delta(1), epsilon(1). CF(0) has three main subunits: a, b and c.

The protein resides in the cellular thylakoid membrane. Functionally, produces ATP from ADP in the presence of a proton gradient across the membrane. The gamma chain is believed to be important in regulating ATPase activity and the flow of protons through the CF(0) complex. The protein is ATP synthase gamma chain of Rippkaea orientalis (strain PCC 8801 / RF-1) (Cyanothece sp. (strain PCC 8801)).